The chain runs to 271 residues: uncharacterized protein (271 aa).

The N-terminal stretch at 1 to 18 is a signal peptide; it reads MKGFFLIAGFLLFARALC. Residues 19–187 are Lumenal-facing; it reads ASWNVEEGTL…FSPPPKRANY (169 aa). A helical membrane pass occupies residues 188–208; sequence FLSICFSVSVVVSLIGLLGVW. Over 209 to 230 the chain is Cytoplasmic; that stretch reads QKLLPKSNVYSVSSSSFARTFG. The chain crosses the membrane as a helical span at residues 231–251; sequence FASLAVAEILLFIYWTSLSIF. The Lumenal portion of the chain corresponds to 252-271; that stretch reads QFGAYAAGVAIMCGIAAKSL.

Its subcellular location is the endoplasmic reticulum membrane. This is an uncharacterized protein from Schizosaccharomyces pombe (strain 972 / ATCC 24843) (Fission yeast).